The chain runs to 307 residues: Protein FAM76A (307 aa).

Disordered regions lie at residues 161–181 (SRLS…SSIQ) and 287–307 (KQAA…ITSP). Residues 217–297 (IIAQLKEEVA…QAAALSKGKK (81 aa)) adopt a coiled-coil conformation.

The protein belongs to the FAM76 family.

This Gallus gallus (Chicken) protein is Protein FAM76A (FAM76A).